Reading from the N-terminus, the 292-residue chain is Small ribosomal subunit biogenesis GTPase RsgA (292 aa).

Residues 64 to 221 (RSELFRPAVA…LVDTPGFSSL (158 aa)) form the CP-type G domain. GTP is bound by residues 113-116 (NKMD) and 164-172 (GPSGVGKST). 4 residues coordinate Zn(2+): cysteine 245, cysteine 250, histidine 252, and cysteine 258.

This sequence belongs to the TRAFAC class YlqF/YawG GTPase family. RsgA subfamily. In terms of assembly, monomer. Associates with 30S ribosomal subunit, binds 16S rRNA. Zn(2+) is required as a cofactor.

The protein localises to the cytoplasm. One of several proteins that assist in the late maturation steps of the functional core of the 30S ribosomal subunit. Helps release RbfA from mature subunits. May play a role in the assembly of ribosomal proteins into the subunit. Circularly permuted GTPase that catalyzes slow GTP hydrolysis, GTPase activity is stimulated by the 30S ribosomal subunit. The chain is Small ribosomal subunit biogenesis GTPase RsgA from Clostridium botulinum (strain Loch Maree / Type A3).